The chain runs to 106 residues: Diptericin A (106 aa).

An N-terminal signal peptide occupies residues 1–19 (MQFTIAVALLCCAIASTLA). A propeptide spans 20-23 (YPMP) (removed by a dipeptidylpeptidase).

The protein belongs to the attacin/sarcotoxin-2 family.

The protein resides in the secreted. Its function is as follows. Antimicrobial peptide required to resist Gram-negative bacterial infections, regulated by Dredd. The sequence is that of Diptericin A from Drosophila melanogaster (Fruit fly).